The following is a 468-amino-acid chain: Bifunctional protein GlmU (468 aa).

The pyrophosphorylase stretch occupies residues 1 to 233; the sequence is MAQAGSASPL…LEEANLVNDR (233 aa). UDP-N-acetyl-alpha-D-glucosamine is bound by residues 15-18, Lys-29, Gln-79, and 84-85; these read LAAG and GT. Asp-109 is a binding site for Mg(2+). Residues Gly-146, Glu-159, Asn-174, and Asn-231 each coordinate UDP-N-acetyl-alpha-D-glucosamine. Asn-231 provides a ligand contact to Mg(2+). The tract at residues 234–254 is linker; sequence SQLARAEEILRRRILDAHMKE. The tract at residues 255-468 is N-acetyltransferase; the sequence is GVTVRDPVST…GDRRRARTEG (214 aa). UDP-N-acetyl-alpha-D-glucosamine is bound by residues Arg-336 and Lys-354. The active-site Proton acceptor is His-366. UDP-N-acetyl-alpha-D-glucosamine-binding residues include Tyr-369 and Asn-380. Acetyl-CoA is bound by residues Ala-383, 389 to 390, and Ala-426; that span reads NY.

This sequence in the N-terminal section; belongs to the N-acetylglucosamine-1-phosphate uridyltransferase family. In the C-terminal section; belongs to the transferase hexapeptide repeat family. Homotrimer. Mg(2+) is required as a cofactor.

Its subcellular location is the cytoplasm. It carries out the reaction alpha-D-glucosamine 1-phosphate + acetyl-CoA = N-acetyl-alpha-D-glucosamine 1-phosphate + CoA + H(+). The catalysed reaction is N-acetyl-alpha-D-glucosamine 1-phosphate + UTP + H(+) = UDP-N-acetyl-alpha-D-glucosamine + diphosphate. The protein operates within nucleotide-sugar biosynthesis; UDP-N-acetyl-alpha-D-glucosamine biosynthesis; N-acetyl-alpha-D-glucosamine 1-phosphate from alpha-D-glucosamine 6-phosphate (route II): step 2/2. It functions in the pathway nucleotide-sugar biosynthesis; UDP-N-acetyl-alpha-D-glucosamine biosynthesis; UDP-N-acetyl-alpha-D-glucosamine from N-acetyl-alpha-D-glucosamine 1-phosphate: step 1/1. Its pathway is bacterial outer membrane biogenesis; LPS lipid A biosynthesis. Functionally, catalyzes the last two sequential reactions in the de novo biosynthetic pathway for UDP-N-acetylglucosamine (UDP-GlcNAc). The C-terminal domain catalyzes the transfer of acetyl group from acetyl coenzyme A to glucosamine-1-phosphate (GlcN-1-P) to produce N-acetylglucosamine-1-phosphate (GlcNAc-1-P), which is converted into UDP-GlcNAc by the transfer of uridine 5-monophosphate (from uridine 5-triphosphate), a reaction catalyzed by the N-terminal domain. In Rubrobacter xylanophilus (strain DSM 9941 / JCM 11954 / NBRC 16129 / PRD-1), this protein is Bifunctional protein GlmU.